Reading from the N-terminus, the 240-residue chain is Leucyl/phenylalanyl-tRNA--protein transferase (240 aa).

It belongs to the L/F-transferase family.

The protein localises to the cytoplasm. The catalysed reaction is N-terminal L-lysyl-[protein] + L-leucyl-tRNA(Leu) = N-terminal L-leucyl-L-lysyl-[protein] + tRNA(Leu) + H(+). It carries out the reaction N-terminal L-arginyl-[protein] + L-leucyl-tRNA(Leu) = N-terminal L-leucyl-L-arginyl-[protein] + tRNA(Leu) + H(+). The enzyme catalyses L-phenylalanyl-tRNA(Phe) + an N-terminal L-alpha-aminoacyl-[protein] = an N-terminal L-phenylalanyl-L-alpha-aminoacyl-[protein] + tRNA(Phe). Functionally, functions in the N-end rule pathway of protein degradation where it conjugates Leu, Phe and, less efficiently, Met from aminoacyl-tRNAs to the N-termini of proteins containing an N-terminal arginine or lysine. The protein is Leucyl/phenylalanyl-tRNA--protein transferase of Maridesulfovibrio salexigens (strain ATCC 14822 / DSM 2638 / NCIMB 8403 / VKM B-1763) (Desulfovibrio salexigens).